A 397-amino-acid polypeptide reads, in one-letter code: Na(+)/H(+) antiporter NhaA 3 (397 aa).

11 consecutive transmembrane segments (helical) span residues Ala-18–Phe-38, Leu-63–Leu-83, Ile-98–Trp-118, Gly-129–Gly-149, Ile-158–Phe-178, Ser-181–Cys-201, Thr-207–Leu-224, Val-269–Met-289, Leu-306–Trp-326, Gly-340–Phe-360, and Leu-373–Ala-393.

The protein belongs to the NhaA Na(+)/H(+) (TC 2.A.33) antiporter family.

Its subcellular location is the cell inner membrane. It catalyses the reaction Na(+)(in) + 2 H(+)(out) = Na(+)(out) + 2 H(+)(in). Na(+)/H(+) antiporter that extrudes sodium in exchange for external protons. This chain is Na(+)/H(+) antiporter NhaA 3, found in Saccharophagus degradans (strain 2-40 / ATCC 43961 / DSM 17024).